The chain runs to 417 residues: S-adenosylmethionine synthase (417 aa).

An ATP-binding site is contributed by His-16. Position 18 (Asp-18) interacts with Mg(2+). A K(+)-binding site is contributed by Glu-44. L-methionine is bound by residues Glu-57 and Gln-100. The flexible loop stretch occupies residues Gln-100–Ser-110. Residues Asp-175–Lys-177, Lys-251–Phe-252, Asp-260, Arg-266–Lys-267, Ala-283, and Lys-287 contribute to the ATP site. Asp-260 is a binding site for L-methionine. An L-methionine-binding site is contributed by Lys-291.

The protein belongs to the AdoMet synthase family. Homotetramer; dimer of dimers. Mg(2+) serves as cofactor. It depends on K(+) as a cofactor.

It localises to the cytoplasm. The catalysed reaction is L-methionine + ATP + H2O = S-adenosyl-L-methionine + phosphate + diphosphate. It participates in amino-acid biosynthesis; S-adenosyl-L-methionine biosynthesis; S-adenosyl-L-methionine from L-methionine: step 1/1. Catalyzes the formation of S-adenosylmethionine (AdoMet) from methionine and ATP. The overall synthetic reaction is composed of two sequential steps, AdoMet formation and the subsequent tripolyphosphate hydrolysis which occurs prior to release of AdoMet from the enzyme. The protein is S-adenosylmethionine synthase of Picosynechococcus sp. (strain ATCC 27264 / PCC 7002 / PR-6) (Agmenellum quadruplicatum).